Consider the following 129-residue polypeptide: Glycine cleavage system H protein (129 aa).

Residues 24 to 106 (HAVVGITDFA…YDGGWLFKLA (83 aa)) enclose the Lipoyl-binding domain. N6-lipoyllysine is present on Lys65.

The protein belongs to the GcvH family. As to quaternary structure, the glycine cleavage system is composed of four proteins: P, T, L and H. Requires (R)-lipoate as cofactor.

Functionally, the glycine cleavage system catalyzes the degradation of glycine. The H protein shuttles the methylamine group of glycine from the P protein to the T protein. The chain is Glycine cleavage system H protein from Hydrogenovibrio crunogenus (strain DSM 25203 / XCL-2) (Thiomicrospira crunogena).